The chain runs to 170 residues: Small ribosomal subunit protein uS5 (170 aa).

Residues 13–76 enclose the S5 DRBM domain; it reads LTEKLIGVNR…DQARRSMVKI (64 aa).

This sequence belongs to the universal ribosomal protein uS5 family. In terms of assembly, part of the 30S ribosomal subunit. Contacts proteins S4 and S8.

In terms of biological role, with S4 and S12 plays an important role in translational accuracy. Its function is as follows. Located at the back of the 30S subunit body where it stabilizes the conformation of the head with respect to the body. This Laribacter hongkongensis (strain HLHK9) protein is Small ribosomal subunit protein uS5.